The sequence spans 498 residues: Guanosine-5'-triphosphate,3'-diphosphate pyrophosphatase (498 aa).

It belongs to the GppA/Ppx family. GppA subfamily.

It catalyses the reaction guanosine 3'-diphosphate 5'-triphosphate + H2O = guanosine 3',5'-bis(diphosphate) + phosphate + H(+). It functions in the pathway purine metabolism; ppGpp biosynthesis; ppGpp from GTP: step 2/2. In terms of biological role, catalyzes the conversion of pppGpp to ppGpp. Guanosine pentaphosphate (pppGpp) is a cytoplasmic signaling molecule which together with ppGpp controls the 'stringent response', an adaptive process that allows bacteria to respond to amino acid starvation, resulting in the coordinated regulation of numerous cellular activities. The protein is Guanosine-5'-triphosphate,3'-diphosphate pyrophosphatase of Pectobacterium carotovorum subsp. carotovorum (strain PC1).